The primary structure comprises 794 residues: Lon protease (794 aa).

In terms of domain architecture, Lon N-terminal spans 29–222; the sequence is VPLLPLRGVL…TLISIIQDEQ (194 aa). 374 to 381 contacts ATP; it reads GPPGVGKT. The region spanning 610–791 is the Lon proteolytic domain; that stretch reads TDQVGMATGL…DEVLEHALVG (182 aa). Residues Ser-697 and Lys-740 contribute to the active site.

The protein belongs to the peptidase S16 family. In terms of assembly, homohexamer. Organized in a ring with a central cavity.

The protein localises to the cytoplasm. It carries out the reaction Hydrolysis of proteins in presence of ATP.. In terms of biological role, ATP-dependent serine protease that mediates the selective degradation of mutant and abnormal proteins as well as certain short-lived regulatory proteins. Required for cellular homeostasis and for survival from DNA damage and developmental changes induced by stress. Degrades polypeptides processively to yield small peptide fragments that are 5 to 10 amino acids long. Binds to DNA in a double-stranded, site-specific manner. In Bacillus thuringiensis (strain Al Hakam), this protein is Lon protease.